The chain runs to 284 residues: Putative transcription factor kapC (284 aa).

A compositionally biased stretch (pro residues) spans 1–10 (MQPTLAPAPH). Residues 1–121 (MQPTLAPAPH…NRAAQRAFRQ (121 aa)) are disordered. Residues 26–40 (HDQLLAAHQHLSHPQ) show a composition bias toward low complexity. A compositionally biased stretch (pro residues) spans 41–54 (QPRPQPPAAQPPHM). Over residues 57–67 (NTTSPRDQNNI) the composition is skewed to polar residues. In terms of domain architecture, bZIP spans 102-165 (PLSTSKRAAQ…EYIINLQSRL (64 aa)). The segment at 103-126 (LSTSKRAAQNRAAQRAFRQRKESY) is basic motif. A compositionally biased stretch (low complexity) spans 108 to 118 (RAAQNRAAQRA). The interval 130–161 (LEEQVKEFDTMSEAFKALQAENYQLREYIINL) is leucine-zipper. The disordered stretch occupies residues 174 to 284 (ELPGNIDLSQ…QAPHGLPMVS (111 aa)). The segment covering 193 to 222 (PGAGPATTSSSAPAPPSGAQQAQPPQGAAS) has biased composition (low complexity).

Belongs to the bZIP family.

Its subcellular location is the nucleus. Its function is as follows. Putative transcription factor. This chain is Putative transcription factor kapC (kapC), found in Aspergillus oryzae (strain ATCC 42149 / RIB 40) (Yellow koji mold).